Consider the following 132-residue polypeptide: Agouti-signaling protein (132 aa).

The first 22 residues, 1–22, serve as a signal peptide directing secretion; sequence MDVTRLLLATLLVFLCFFTAYS. N39 carries N-linked (GlcNAc...) asparagine glycosylation. The tract at residues 61-87 is disordered; the sequence is QISRKEAEKKRSSKKEASMKKVARPRT. Basic and acidic residues predominate over residues 63–79; that stretch reads SRKEAEKKRSSKKEASM. Cystine bridges form between C93/C108, C100/C114, C107/C125, C111/C132, and C116/C123. Residues 93 to 132 enclose the Agouti domain; sequence CVTTRDSCKPPAPACCDPCASCQCRFFRSACSCRVLSLNC.

It localises to the secreted. Its function is as follows. Involved in the regulation of melanogenesis. The binding of ASP to MC1R precludes alpha-MSH initiated signaling and thus blocks production of cAMP, leading to a down-regulation of eumelanogenesis (brown/black pigment) and thus increasing synthesis of pheomelanin (yellow/red pigment). The polypeptide is Agouti-signaling protein (ASIP) (Macaca silenus (Lion-tailed macaque)).